The sequence spans 371 residues: Gamma-tocopherol methyltransferase, chloroplastic (371 aa).

Residues 1–65 constitute a chloroplast transit peptide; sequence MAAAPVFFPS…NSNRIASRLQ (65 aa). Positions 153–162 are SAM motif I; that stretch reads IVDVGCGIGG. The interval 216–224 is SAM motif II; the sequence is GQFDLVWSM. An SAM motif III region spans residues 243 to 252; that stretch reads VAAPGATIII.

Belongs to the class I-like SAM-binding methyltransferase superfamily. gTMT family. In terms of assembly, homodimer.

Its subcellular location is the plastid. It is found in the chloroplast inner membrane. It catalyses the reaction picrinine + S-adenosyl-L-methionine = ervincine + S-adenosyl-L-homocysteine + H(+). It participates in alkaloid biosynthesis; vindoline biosynthesis. S-adenosyl-L-methionine-dependent N-methyltransferase involved in the biosynthesis of biologically active monoterpenoid indole alkaloids (MIAs) natural products including vindoline. Inactive with picrinine as substrate. In Catharanthus roseus (Madagascar periwinkle), this protein is Gamma-tocopherol methyltransferase, chloroplastic.